A 353-amino-acid chain; its full sequence is MAPTRHWVTPLLLLCCSGICGAIQWLGLTVNGSRVAWNESEHCRLLDGLVPDQSQLCKRNLELMQSVVNAAKQTKLTCQMTLSDMRWNCSSVENAPSFTPDLSKGTRESAFVYALASATLSHTIARACASGELPTCSCGATPAEVPGTGFRWGGCGDNLHYGLNMGSAFVDAPMKSSKSAGTQATKIMNLHNNAVGRQVLMDSLETKCKCHGVSGSCSVKTCWKGLQDLPHIANELKSKYLGATKVIHRQTGTRRQLVPRELDIRPVRESELVYLVSSPDYCTKNPKLGSYGTQDRLCNKTSVGSDSCNLMCCGRGYNAYTETIVERCQCKYHWCCYVMCKKCERTVERYVCK.

The signal sequence occupies residues 1 to 22; sequence MAPTRHWVTPLLLLCCSGICGA. N-linked (GlcNAc...) asparagine glycans are attached at residues Asn-31, Asn-38, and Asn-88. Intrachain disulfides connect Cys-78-Cys-89, Cys-128-Cys-136, Cys-138-Cys-155, Cys-208-Cys-222, and Cys-210-Cys-217. Ser-214 carries the O-palmitoleoyl serine; by PORCN lipid modification. Sulfotyrosine occurs at positions 274 and 281. Intrachain disulfides connect Cys-282–Cys-313, Cys-298–Cys-308, Cys-312–Cys-352, Cys-328–Cys-343, Cys-330–Cys-340, and Cys-335–Cys-336. N-linked (GlcNAc...) asparagine glycosylation occurs at Asn-299.

The protein belongs to the Wnt family. As to quaternary structure, homodimer. Secreted homodimers form a complex with wnt5a homodimers; tyrosine sulfation of both wnt11 and wnt5a by tpst1 is required for this interaction. Interacts with the transmembrane receptor fzd7/fz7. Interacts with lrp6 and ryk. Interacts with tdgf1/frl1. Interacts weakly with frzb1 and strongly with frzb2/crescent. Interaction with frzb2/crescent antagonizes wnt11 function in the neuroectoderm, but enhances it in mesodermal tissue. Post-translationally, glycosylation is required for protein secretion. In terms of processing, palmitoleoylation is required for efficient binding to frizzled receptors. Depalmitoleoylation leads to Wnt signaling pathway inhibition. In terms of tissue distribution, transcripts are expressed ubiquitously in early oocytes but become vegetally localized during mid-oogenesis then enriched on the dorsal side by the 8 to 16 cell stage. The protein becomes asymmetrically concentrated on the dorsal side by the 64-cell stage. During gastrulation, expressed in the lateral and ventral marginal zone, and during tadpole stages in the somites and first branchial arch. Weakly expressed in the pronephros from at least stage 12.5, with kidney expression increasing until stage 35. Expressed in the prospective posterior gut between stages 13 and 20, and in the deep foregut endoderm. Prior to neural crest cell migration, expressed in a domain flanking the neural crest on the lateral or epidermal side (the opposite side to wnt11/wnt11-r).

Its subcellular location is the secreted. The protein resides in the extracellular space. It is found in the extracellular matrix. Functionally, ligand for the frizzled7 transmembrane receptor. Primarily acts via non-canonical Wnt pathways mediated by either Ca(2+) and PKC, or by JNK and dvl2/dsh. Depending on the cellular context, can also signal via the canonical Wnt pathway mediated by beta-catenin and dvl2/dsh. May also inhibit canonical Wnt signaling. Maternally initiates dorsal/ventral axis formation by a canonical route, which signals via lrp6. In a complex with wnt5a, activates the canonical and non-canonical processes involved in axis formation. In the non-canonical pathway, acts through fzd7/fz7 to induce phosphorylation of dvl2/dsh. Signals through a non-canonical Wnt pathway to regulate convergent extension movements during gastrulation. Interactions with the secreted Wnt antagonist sfrp5 to coordinate foregut development, acting via a non-canonical Wnt pathway whereby sfrp5 restricts wnt11b activity to prevent inappropriate foregut formation. Mediates cardiogenesis via non-canonical Wnt signaling involving JNK-activation and PKC. Acts redundantly with wnt11/wnt11r during pronephros induction. The protein is Protein Wnt-11b (wnt11b) of Xenopus laevis (African clawed frog).